The following is a 361-amino-acid chain: DNA polymerase subunit gamma-2, mitochondrial (361 aa).

Residues 1–18 (MSRIQRCFKSLASAGFFR) constitute a mitochondrion transit peptide.

As to quaternary structure, component of the DNA polymerase gamma complex consisting of two subunits: the catalytic subunit DNApol-gamma/DNApolG1 and the accessory subunit PolG2/DNApol-gamma35. Expressed in ovaries (at protein level).

It is found in the mitochondrion. Functionally, as accessory component of the DNA polymerase gamma complex is involved in the replication of mitochondrial DNA. Does not bind DNA. Essential for mitochondrial DNA maintenance and larval development. The polypeptide is DNA polymerase subunit gamma-2, mitochondrial (Drosophila melanogaster (Fruit fly)).